The following is a 161-amino-acid chain: Cuticle protein 16.8 (161 aa).

The residue at position 1 (Gln1) is a Pyrrolidone carboxylic acid. Over residues Gln1–Pro10 the composition is skewed to pro residues. Disordered stretches follow at residues Gln1 to Thr44 and Glu67 to Pro103. The 67-residue stretch at Pro8–Lys74 folds into the Chitin-binding type R&amp;R domain. The span at Glu67 to Asn86 shows a compositional bias: polar residues. Positions Ala87–Pro103 are enriched in low complexity.

Its function is as follows. Component of the cuticle of the tick. Binds chitin. The polypeptide is Cuticle protein 16.8 (Ixodes ricinus (Common tick)).